A 355-amino-acid polypeptide reads, in one-letter code: Iron deficiency-induced protein A (355 aa).

A signal peptide (tat-type signal) is located at residues 1–34 (MEKVGRRVFLGMGAAATAYVTHHLWNQNAESSYA). Residues His-49, Tyr-50, Tyr-180, Tyr-236, and Tyr-237 each coordinate Fe cation.

Belongs to the bacterial solute-binding protein 1 family. In terms of processing, predicted to be exported by the Tat system. The position of the signal peptide cleavage has not been experimentally proven.

It is found in the cellular thylakoid membrane. Functionally, plays an important role in protecting the acceptor side of photosystem II (PSII) against oxidative damage, especially under iron-limiting growth conditions. In terms of biological role, may also be part of a periplasmic ABC transporter complex involved in iron import. The protein is Iron deficiency-induced protein A (idiA) of Thermosynechococcus vestitus (strain NIES-2133 / IAM M-273 / BP-1).